The sequence spans 304 residues: MSVAPIDFQQVEKRYDDKLVVDGLSFHVQPGECFGLLGPNGAGKTTALKMLLGITHPDAGSISLCGEPVPSRARHARRRVGVVPQFDNLDPDFTVRENLLVFARYFGLAAHEARALVPPLLEFAKLENKADAKVGELSGGMKRRLTLARALVNNPDVLVLDEPTTGLDPQARHLMWERLRSLLVRGKTILLTTHFMEEAERLCHRLCVIEEGRKIAEGAPRTLIESEIGCDVIEIYGPDPAQLREELAPFAERTEISGETLFCYVDDPEPVNARLKGRAGLRYLHRPANLEDVFLRLTGREMQD.

One can recognise an ABC transporter domain in the interval 6–236 (IDFQQVEKRY…EIGCDVIEIY (231 aa)). 38-45 (GPNGAGKT) contacts ATP.

It belongs to the ABC transporter superfamily. Lipooligosaccharide exporter (TC 3.A.1.102) family. In terms of assembly, the complex is composed of two ATP-binding proteins (NodI) and two transmembrane proteins (NodJ).

It localises to the cell inner membrane. Functionally, part of the ABC transporter complex NodIJ involved in the export of the nodulation factors (Nod factors), the bacterial signal molecules that induce symbiosis and subsequent nodulation induction. Nod factors are LCO (lipo-chitin oligosaccharide), a modified beta-1,4-linked N-acetylglucosamine oligosaccharide. This subunit is responsible for energy coupling to the transport system. This Burkholderia thailandensis (strain ATCC 700388 / DSM 13276 / CCUG 48851 / CIP 106301 / E264) protein is Nod factor export ATP-binding protein I.